Here is a 217-residue protein sequence, read N- to C-terminus: MVKLGCSFSGKPGKDPGDQDGAAMDSVPLISPLDISQLQPPLPDQVVIKTQTEYQLSSPDQQNFPDLEGQRLNCSHPEEGRRLPTARMIAFAMALLGCVLIMYKAIWYDQFTCPDGFLLRHKICTPLTLEMYYTEMDPERHRSILAAIGAYPLSRKHGTETPAAWGDGYRAAKEERKGPTQAGAAAAATEPPGKPSAKAEKEAARKAAGSAAPPPAQ.

Residues 1 to 25 form a disordered region; that stretch reads MVKLGCSFSGKPGKDPGDQDGAAMD. Topologically, residues 1 to 87 are extracellular; it reads MVKLGCSFSG…EEGRRLPTAR (87 aa). N-linked (GlcNAc...) asparagine glycosylation occurs at N73. Residues 88–108 traverse the membrane as a helical segment; it reads MIAFAMALLGCVLIMYKAIWY. Residues 109–217 lie on the Cytoplasmic side of the membrane; sequence DQFTCPDGFL…AGSAAPPPAQ (109 aa). Residues 162–217 form a disordered region; sequence PAAWGDGYRAAKEERKGPTQAGAAAAATEPPGKPSAKAEKEAARKAAGSAAPPPAQ.

Belongs to the NSG family. In terms of assembly, interacts with CLTA. In terms of processing, glycosylated. In terms of tissue distribution, expressed in the pyramidal cells of the prefrontal cortex, in hypothalamus and in caudate nucleus. No expression in spleen. Up-regulated in the prefrontal cortex of schizophrenic patients with nearly twice the levels of non-schizophrenics.

The protein resides in the cytoplasmic vesicle membrane. The protein localises to the cell membrane. In terms of biological role, interacts with clathrin light chain A and stimulates clathrin self-assembly and clathrin-mediated endocytosis. This chain is Neuron-specific vesicular protein calcyon (CALY), found in Homo sapiens (Human).